A 521-amino-acid polypeptide reads, in one-letter code: Acetylcholine receptor subunit beta-like 1 (521 aa).

Residues 1–24 (MESSCKSWLLCSILVLVAFSLVSA) form the signal peptide. Over 25-235 (SEDEERLVRD…ITFYIIIRRK (211 aa)) the chain is Extracellular. The N-linked (GlcNAc...) asparagine glycan is linked to N48. The cysteines at positions 152 and 166 are disulfide-linked. 3 consecutive transmembrane segments (helical) span residues 236-260 (TLFY…VFYL), 268-286 (VTLG…LLVS), and 302-323 (YLLF…IINW). At 324–481 (NFRGPRTHRM…WKYVAMVIDR (158 aa)) the chain is on the cytoplasmic side. Residues 482 to 500 (LQLYIFFIVTTAGTVGILM) traverse the membrane as a helical segment.

Belongs to the ligand-gated ion channel (TC 1.A.9) family. Acetylcholine receptor (TC 1.A.9.1) subfamily. As to expression, CNS in embryos.

The protein localises to the postsynaptic cell membrane. The protein resides in the cell membrane. After binding acetylcholine, the AChR responds by an extensive change in conformation that affects all subunits and leads to opening of an ion-conducting channel across the plasma membrane. This is Acetylcholine receptor subunit beta-like 1 (nAChRbeta1) from Drosophila melanogaster (Fruit fly).